Consider the following 527-residue polypeptide: Peptidoglycan O-acetyltransferase (527 aa).

A run of 11 helical transmembrane segments spans residues 11-31, 55-75, 96-116, 131-151, 187-207, 228-248, 280-300, 352-372, 397-417, 463-483, and 505-525; these read VFVL…VGFL, LFFY…SIVF, LILG…TDFF, LHLI…AYLM, HFLD…GPIV, NIAL…VIAD, LYFD…FFNI, LILV…FIIW, MPKI…WVFF, IMYA…SFCL, and LLLS…FLYF. His363 is a catalytic residue.

The protein belongs to the membrane-bound acyltransferase family.

It localises to the cell membrane. In terms of biological role, catalyzes the O-acetylation of peptidoglycan (PG), an important mechanism that appears to confer lysozyme resistance and contributes to pathogen persistence in the host. The chain is Peptidoglycan O-acetyltransferase (patA) from Helicobacter pylori (strain ATCC 700392 / 26695) (Campylobacter pylori).